The sequence spans 1761 residues: Laminin subunit beta-4 (1761 aa).

Positions 1–19 are cleaved as a signal peptide; sequence MQFQLTLFLHLGWLSYSKA. A Laminin N-terminal domain is found at 24 to 264; it reads NRGACHPTTG…ALYEMIVRGS (241 aa). Residues Asn169, Asn229, and Asn246 are each glycosylated (N-linked (GlcNAc...) asparagine). Disulfide bonds link Cys265/Cys274, Cys267/Cys295, Cys297/Cys306, Cys309/Cys329, Cys332/Cys341, Cys334/Cys359, Cys362/Cys371, Cys374/Cys392, Cys395/Cys408, Cys397/Cys423, Cys425/Cys434, Cys437/Cys452, Cys455/Cys468, Cys457/Cys475, Cys477/Cys486, Cys489/Cys503, Cys506/Cys518, Cys508/Cys525, and Cys527/Cys536. Laminin EGF-like domains lie at 265–331, 332–394, 395–454, and 455–505; these read CFCN…ACRS, CSCN…ACIP, CECD…GCQP, and CDCN…GCSP. Residues 506–552 form the Laminin EGF-like 5; truncated domain; sequence CDCDIGGAYSNVCSPKNGQCECRPHVTGRSCSEPAPGYFFAPLNFYL. The Laminin IV type B domain maps to 545-763; it reads FAPLNFYLYE…LIISMSAKLH (219 aa). 31 disulfides stabilise this stretch: Cys769/Cys781, Cys771/Cys788, Cys790/Cys799, Cys802/Cys814, Cys817/Cys829, Cys819/Cys836, Cys838/Cys847, Cys850/Cys860, Cys863/Cys872, Cys865/Cys879, Cys882/Cys891, Cys894/Cys908, Cys913/Cys938, Cys940/Cys949, Cys952/Cys967, Cys970/Cys984, Cys972/Cys991, Cys994/Cys1003, Cys1006/Cys1019, Cys1022/Cys1043, Cys1024/Cys1050, Cys1052/Cys1061, Cys1064/Cys1077, Cys1080/Cys1092, Cys1082/Cys1099, Cys1101/Cys1110, Cys1113/Cys1125, Cys1128/Cys1140, Cys1130/Cys1147, Cys1149/Cys1158, and Cys1161/Cys1172. Laminin EGF-like domains follow at residues 769 to 816, 817 to 862, 863 to 910, 911 to 969, 970 to 1021, 1022 to 1079, 1080 to 1127, and 1128 to 1174; these read CKCH…GCHP, CHCH…SCHP, CPCN…PCRP, CLCP…PCQP, CACN…TCRR, CSCH…GCQS, CDCD…RCIP, and CDCN…TCLQ. Asn1016 is a glycosylation site (N-linked (GlcNAc...) asparagine). The N-linked (GlcNAc...) asparagine glycan is linked to Asn1055. The domain II stretch occupies residues 1175-1375; it reads CHLCFDQWDH…PDIQILNEKV (201 aa). N-linked (GlcNAc...) asparagine glycosylation is found at Asn1223, Asn1301, Asn1326, Asn1333, and Asn1354. Positions 1243 to 1301 form a coiled coil; it reads KVKDYHDSVRRQIMQLNEQLKAVYEFQDLKDTIERAKNEADLLLEDLQEEIDLQSSVLN. Positions 1376 to 1408 are domain alpha; it reads CGDPGNVPCVPLPCGGALCTGRKGHRKCRGPGC. The domain I stretch occupies residues 1409–1761; it reads HGSLTLSTNA…QEKKYARCYS (353 aa). The stretch at 1416 to 1480 forms a coiled coil; the sequence is TNALQKAQEA…SDSEEENINL (65 aa). Asn1469, Asn1517, Asn1587, Asn1596, Asn1609, and Asn1725 each carry an N-linked (GlcNAc...) asparagine glycan. Residues 1525-1759 are a coiled coil; the sequence is IQKHMQLCED…VEQEKKYARC (235 aa).

As to quaternary structure, laminin is a complex glycoprotein, consisting of three different polypeptide chains (alpha, beta, gamma), which are bound to each other by disulfide bonds into a cross-shaped molecule comprising one long and three short arms with globules at each end.

The protein resides in the secreted. It is found in the extracellular space. The protein localises to the extracellular matrix. It localises to the basement membrane. In terms of biological role, binding to cells via a high affinity receptor, laminin is thought to mediate the attachment, migration and organization of cells into tissues during embryonic development by interacting with other extracellular matrix components. The sequence is that of Laminin subunit beta-4 (LAMB4) from Homo sapiens (Human).